The following is a 345-amino-acid chain: Anthranilate phosphoribosyltransferase (345 aa).

Residues G80, 83–84 (GD), T88, 90–93 (NIST), 108–116 (KHGNRSVSS), and S120 each bind 5-phospho-alpha-D-ribose 1-diphosphate. An anthranilate-binding site is contributed by G80. S92 serves as a coordination point for Mg(2+). Position 111 (N111) interacts with anthranilate. R166 serves as a coordination point for anthranilate. Mg(2+) contacts are provided by D225 and E226.

Belongs to the anthranilate phosphoribosyltransferase family. As to quaternary structure, homodimer. It depends on Mg(2+) as a cofactor.

The enzyme catalyses N-(5-phospho-beta-D-ribosyl)anthranilate + diphosphate = 5-phospho-alpha-D-ribose 1-diphosphate + anthranilate. It participates in amino-acid biosynthesis; L-tryptophan biosynthesis; L-tryptophan from chorismate: step 2/5. In terms of biological role, catalyzes the transfer of the phosphoribosyl group of 5-phosphorylribose-1-pyrophosphate (PRPP) to anthranilate to yield N-(5'-phosphoribosyl)-anthranilate (PRA). In Acetivibrio thermocellus (strain ATCC 27405 / DSM 1237 / JCM 9322 / NBRC 103400 / NCIMB 10682 / NRRL B-4536 / VPI 7372) (Clostridium thermocellum), this protein is Anthranilate phosphoribosyltransferase.